A 284-amino-acid polypeptide reads, in one-letter code: Bifunctional protein FolD (284 aa).

Residues 166–168 and isoleucine 232 contribute to the NADP(+) site; that span reads GAS.

It belongs to the tetrahydrofolate dehydrogenase/cyclohydrolase family. As to quaternary structure, homodimer.

It carries out the reaction (6R)-5,10-methylene-5,6,7,8-tetrahydrofolate + NADP(+) = (6R)-5,10-methenyltetrahydrofolate + NADPH. It catalyses the reaction (6R)-5,10-methenyltetrahydrofolate + H2O = (6R)-10-formyltetrahydrofolate + H(+). Its pathway is one-carbon metabolism; tetrahydrofolate interconversion. Functionally, catalyzes the oxidation of 5,10-methylenetetrahydrofolate to 5,10-methenyltetrahydrofolate and then the hydrolysis of 5,10-methenyltetrahydrofolate to 10-formyltetrahydrofolate. The polypeptide is Bifunctional protein FolD (Tolumonas auensis (strain DSM 9187 / NBRC 110442 / TA 4)).